A 382-amino-acid chain; its full sequence is Porphobilinogen deaminase, chloroplastic (382 aa).

The N-terminal 62 residues, 1 to 62, are a transit peptide targeting the chloroplast; it reads MDIASSSLSQ…KQSSSGFVKA (62 aa). Arg80 and Ser82 together coordinate dipyrromethane. Ser123 bears the Phosphoserine mark. Residues 156–157, 200–206, and 223–229 contribute to the dipyrromethane site; these read KD, TASLRRK, and RGNVQTR. The active-site Proton donor/acceptor is Asp157. The residue at position 316 (Cys316) is an S-(dipyrrolylmethanemethyl)cysteine.

The protein belongs to the HMBS family. In terms of assembly, monomer. Requires dipyrromethane as cofactor.

The protein localises to the plastid. It is found in the chloroplast. It carries out the reaction 4 porphobilinogen + H2O = hydroxymethylbilane + 4 NH4(+). It functions in the pathway porphyrin-containing compound metabolism; protoporphyrin-IX biosynthesis; coproporphyrinogen-III from 5-aminolevulinate: step 2/4. It participates in porphyrin-containing compound metabolism; chlorophyll biosynthesis. Inhibited by NH(3), heavy-metal ions, hydroxylamine and 2-bromoporphobilinogen. Not inhibited by N-ethylmaleimide. In terms of biological role, tetrapolymerization of the monopyrrole PBG into the hydroxymethylbilane pre-uroporphyrinogen in several discrete steps. The sequence is that of Porphobilinogen deaminase, chloroplastic (HEMC) from Arabidopsis thaliana (Mouse-ear cress).